The chain runs to 57 residues: Large ribosomal subunit protein bL32 (57 aa).

Residues 1–23 (MAVPKKKTSKSKRDKRRATWRHK) form a disordered region.

Belongs to the bacterial ribosomal protein bL32 family.

This Trichormus variabilis (strain ATCC 29413 / PCC 7937) (Anabaena variabilis) protein is Large ribosomal subunit protein bL32.